Consider the following 245-residue polypeptide: Tetraspanin-6 (245 aa).

Topologically, residues 1–19 (MASPSRRLQTKPVITCFKS) are cytoplasmic. A helical transmembrane segment spans residues 20–40 (VLLIYTFIFWITGVILLAVGI). The Extracellular segment spans residues 41 to 59 (WGKVSLENYFSLLNEKATN). Residues 60–80 (VPFVLIGTGTVIILLGTFGCF) form a helical membrane-spanning segment. At 81 to 93 (ATCRASAWMLKLY) the chain is on the cytoplasmic side. The helical transmembrane segment at 94-114 (AMFLTLIFLVELVAAIIGFVF) threads the bilayer. Residues 115–208 (RHEIKNSLKN…IMVMTIIESE (94 aa)) lie on the Extracellular side of the membrane. The N-linked (GlcNAc...) asparagine glycan is linked to Asn134. The helical transmembrane segment at 209 to 229 (MGVVAGISFGVACFQLIGIFL) threads the bilayer. At 230 to 245 (AYCLSRAITNNQYEIV) the chain is on the cytoplasmic side.

The protein belongs to the tetraspanin (TM4SF) family.

The protein localises to the membrane. The protein is Tetraspanin-6 (TSPAN6) of Bos taurus (Bovine).